The chain runs to 435 residues: Protein lin-54 (435 aa).

The segment at 73-136 (DEPIDTSSHR…PASLPRTVQP (64 aa)) is disordered. The segment covering 102–120 (TPGSSQYTVRNLSNLSGSP) has biased composition (polar residues). The CRC domain occupies 173 to 288 (QRKPCNCTKS…KCKGCQNTET (116 aa)). Residues 175 to 188 (KPCNCTKSQCLKLY) are DNA-binding. Cysteine 177, cysteine 179, cysteine 184, cysteine 189, cysteine 191, cysteine 198, cysteine 201, cysteine 203, and cysteine 206 together coordinate Zn(2+). Positions 235-250 (IGIARGGITDIERLHQ) are linker. Residues cysteine 253, cysteine 255, cysteine 260, cysteine 265, cysteine 267, cysteine 274, cysteine 278, cysteine 280, and cysteine 283 each coordinate Zn(2+). Residues 253-266 (CHCKKSGCLKNYCE) form a DNA-binding region. Residues 415–435 (LTQDLDAAPTDDIPGPSTSTS) form a disordered region.

The protein belongs to the lin-54 family. As to quaternary structure, component of the DRM complex, at least composed of lin-9, lin-35, lin-37, lin-52, lin-53, lin-54- dpl-1 and efl-1.

The protein resides in the nucleus. The protein localises to the chromosome. In terms of biological role, synthetic multivulva class B (synMuvB) protein. SynMuvB proteins are required to repress the induction of vulval development by Ras signaling and probably act by forming the multiprotein DRM complex that repress transcription. The sequence is that of Protein lin-54 from Caenorhabditis elegans.